The following is a 250-amino-acid chain: MSSEEDKITRISIEPEKQTLLDHHTEKHFTAGEIVRDIIIGVSDGLTVPFALAAGLSGANASSSIVLTAGIAEVAAGAISMGLGGYLAAKSEEDHYAREMKREQEEIVAVPETEAAEVAEILAQYGIEPHEYSPVVNALRKNPQAWLDFMMRFELGLEKPDPKRALQSAFTIAIAYVLGGFIPLLPYMLIPHAMDAVVASVVITLFALFIFGYAKGHFTGSKPLRSAFETAFIGAIASAAAFCLAKVVQH.

Over 1-37 the chain is Cytoplasmic; sequence MSSEEDKITRISIEPEKQTLLDHHTEKHFTAGEIVRD. Residues 38 to 58 form a helical membrane-spanning segment; the sequence is IIIGVSDGLTVPFALAAGLSG. Topologically, residues 59–64 are vacuolar; sequence ANASSS. A helical transmembrane segment spans residues 65–85; sequence IVLTAGIAEVAAGAISMGLGG. Residues 86 to 169 lie on the Cytoplasmic side of the membrane; the sequence is YLAAKSEEDH…PDPKRALQSA (84 aa). The tract at residues 91–166 is cytoplasmic metal binding domain (MBD); that stretch reads SEEDHYAREM…LEKPDPKRAL (76 aa). Fe cation contacts are provided by glutamate 103, glutamate 106, glutamate 114, glutamate 117, methionine 150, and glutamate 154. Residues 170–190 traverse the membrane as a helical segment; that stretch reads FTIAIAYVLGGFIPLLPYMLI. Residues 191-192 lie on the Vacuolar side of the membrane; the sequence is PH. The chain crosses the membrane as a helical span at residues 193-213; the sequence is AMDAVVASVVITLFALFIFGY. Topologically, residues 214–227 are cytoplasmic; the sequence is AKGHFTGSKPLRSA. The helical transmembrane segment at 228–248 threads the bilayer; that stretch reads FETAFIGAIASAAAFCLAKVV. At 249-250 the chain is on the vacuolar side; it reads QH.

This sequence belongs to the CCC1 family. As to quaternary structure, homodimer. The dimeric interaction is mediated by both the transmembrane domains (TMDs) and the cytoplasmic metal binding domain (MBD). In terms of tissue distribution, highly expressed in developing embryo and seed. Expressed in young seedlings, predominantly in the vasculature.

Its subcellular location is the vacuole membrane. The enzyme catalyses Fe(2+)(in) = Fe(2+)(out). Functionally, vacuolar iron transporter involved in the transfer of iron ions from the cytosol to the vacuole for intracellular iron storage. Involved in regulation of cellular iron homeostasis. Vacuolar iron storage is required for seed embryo and seedling development. This Arabidopsis thaliana (Mouse-ear cress) protein is Vacuolar iron transporter 1.